A 217-amino-acid chain; its full sequence is Probable GTP-binding protein EngB (217 aa).

The 185-residue stretch at 33–217 (GPTEIAFAGR…RAAIELAVTR (185 aa)) folds into the EngB-type G domain. Residues 41-48 (GRSNVGKS), 68-72 (GRTQE), 95-98 (DMPG), 162-165 (TKTD), and 196-198 (TSS) each bind GTP. Serine 48 and threonine 70 together coordinate Mg(2+).

The protein belongs to the TRAFAC class TrmE-Era-EngA-EngB-Septin-like GTPase superfamily. EngB GTPase family. Requires Mg(2+) as cofactor.

In terms of biological role, necessary for normal cell division and for the maintenance of normal septation. The protein is Probable GTP-binding protein EngB of Rhizobium meliloti (strain 1021) (Ensifer meliloti).